The sequence spans 376 residues: uncharacterized protein (376 aa).

Belongs to the NAD(P)-dependent epimerase/dehydratase family.

This is an uncharacterized protein from Mycobacterium bovis (strain ATCC BAA-935 / AF2122/97).